Reading from the N-terminus, the 278-residue chain is Putative transposase for insertion sequence element IS986/IS6110 (278 aa).

One can recognise an Integrase catalytic domain in the interval 101–268 (GPPAPNRLWV…VPPVELEAAY (168 aa)).

Involved in the transposition of the insertion sequence. The chain is Putative transposase for insertion sequence element IS986/IS6110 from Mycobacterium tuberculosis (strain CDC 1551 / Oshkosh).